A 575-amino-acid polypeptide reads, in one-letter code: Carboxylesterase 5A (575 aa).

The N-terminal stretch at 1 to 20 (MSGNWVHPGQILIWAIWVLA) is a signal peptide. Cys94 and Cys121 are disulfide-bonded. The Acyl-ester intermediate role is filled by Ser226. Asn281 carries N-linked (GlcNAc...) asparagine glycosylation. Residue Glu345 is the Charge relay system of the active site. A glycan (N-linked (GlcNAc...) asparagine) is linked at Asn363. His454 serves as the catalytic Charge relay system. N-linked (GlcNAc...) asparagine glycans are attached at residues Asn513 and Asn524.

It belongs to the type-B carboxylesterase/lipase family. N-glycosylated.

It is found in the secreted. The catalysed reaction is a carboxylic ester + H2O = an alcohol + a carboxylate + H(+). In terms of biological role, involved in the detoxification of xenobiotics and in the activation of ester and amide prodrugs. In Homo sapiens (Human), this protein is Carboxylesterase 5A (CES5A).